The sequence spans 255 residues: MSDDNSVTKVAAFYQFAALPDYRELREPLRAFCAGLALKGSVLLAQEGINGTIAGAPDAIDAFAHELAHGTMFGGRLDNLELKFSTAEAMPFGRLKVRLKKEIVTLGDAAADPTRQVGTYVDAAAWNALIAAPDTLVLDTRNAFEVAMGTFEGAVDPGIKSFGQFKDFAAERLDPAKHRRIAMFCTGGIRCEKASAHLLARGFAEVYHLKGGILKYLEEVPEAQSRWRGECFVFDERVALGHGLRERDKDATRDQ.

The 95-residue stretch at 131-225 (AAPDTLVLDT…YLEEVPEAQS (95 aa)) folds into the Rhodanese domain. The Cysteine persulfide intermediate role is filled by cysteine 185.

It belongs to the TrhO family.

It carries out the reaction uridine(34) in tRNA + AH2 + O2 = 5-hydroxyuridine(34) in tRNA + A + H2O. Catalyzes oxygen-dependent 5-hydroxyuridine (ho5U) modification at position 34 in tRNAs. The chain is tRNA uridine(34) hydroxylase from Bradyrhizobium diazoefficiens (strain JCM 10833 / BCRC 13528 / IAM 13628 / NBRC 14792 / USDA 110).